A 258-amino-acid chain; its full sequence is Glutamate racemase (258 aa).

Residues 11–12 (DS) and 43–44 (YG) each bind substrate. The Proton donor/acceptor role is filled by Cys-74. Position 75-76 (75-76 (NT)) interacts with substrate. The active-site Proton donor/acceptor is the Cys-187. 188 to 189 (TH) provides a ligand contact to substrate.

It belongs to the aspartate/glutamate racemases family.

It catalyses the reaction L-glutamate = D-glutamate. Its pathway is cell wall biogenesis; peptidoglycan biosynthesis. Its function is as follows. Provides the (R)-glutamate required for cell wall biosynthesis. This Bifidobacterium adolescentis (strain ATCC 15703 / DSM 20083 / NCTC 11814 / E194a) protein is Glutamate racemase.